The primary structure comprises 443 residues: Leucine-rich repeat-containing protein 17 (443 aa).

A signal peptide spans 1–15 (MRIVAILLLFCLCRA). The interval 20 to 48 (KSSPGVLRSQGNPSRSHGRGGRRGSSPVK) is disordered. LRR repeat units lie at residues 84–105 (DLLHMLLARNKIRVLKNNMFAK), 108–129 (RLKSLDLQQNEISKIESEAFFG), and 132–153 (KLTTLLLQHNQIKVLTEEAFIY). In terms of domain architecture, LRRCT 1 spans 165 to 216 (NPWHCTCELETLISMLQIPRNRNLGNYAKCGSPPALRNKKLLQLKPQELCDE). One can recognise an LRRNT domain in the interval 229-270 (SGIPAVIRPEADSTLCHNYVFPIQTLDCKRKELKKVPSNIPP). LRR repeat units lie at residues 271 to 292 (DIVKLDLSSNKIRQLRPKEFED), 295 to 316 (ELKKLNLSSNGIEFIDPAAFLG), and 319 to 342 (HLEELDLSNNSLQNFDYGVLEDLY). The region spanning 352 to 404 (NPWRCDYSIHYLYYWLKHHYNVHYNGLECKTPEEYKGWSVGKYVRSYYEECPK) is the LRRCT 2 domain.

As to expression, expressed in osteoblasts, spleen, lung and heart.

It localises to the secreted. Its subcellular location is the extracellular space. In terms of biological role, involved in bone homeostasis. Acts as a negative regulator of RANKL-induced osteoclast precursor differentiation from bone marrow precursors. The polypeptide is Leucine-rich repeat-containing protein 17 (Lrrc17) (Mus musculus (Mouse)).